We begin with the raw amino-acid sequence, 465 residues long: GDNF family receptor alpha-1 (465 aa).

An N-terminal signal peptide occupies residues 1–24 (MFLATLYFALPLLDLLLSAEVSGG). Repeat copies occupy residues 25–113 (DRLD…LQGN), 150–238 (KGNN…YEER), and 239–342 (EKPN…KNAI). Cys36 and Cys42 form a disulfide bridge. Asn59 carries an N-linked (GlcNAc...) asparagine glycan. 10 disulfide bridges follow: Cys154/Cys214, Cys161/Cys167, Cys178/Cys192, Cys187/Cys233, Cys216/Cys221, Cys243/Cys313, Cys250/Cys256, Cys267/Cys285, Cys277/Cys337, and Cys315/Cys325. N-linked (GlcNAc...) asparagine glycosylation is found at Asn347 and Asn406. The GPI-anchor amidated serine moiety is linked to residue Ser429. The propeptide at 430–465 (HITTKSMAAPPSCGLSPLLVLVVTALSTLLSLTETS) is removed in mature form.

This sequence belongs to the GDNFR family. As to quaternary structure, interacts with GDNF ligand and RET: forms a 2:2:2 ternary complex composed of GDNF ligand, GFRA1 and RET receptor. Interacts with SORL1, either alone or in complex with GDNF. Interaction between SORL1 and GFRA1 leads to GFRA1 internalization, but not degradation.

The protein resides in the cell membrane. It localises to the golgi apparatus. Its subcellular location is the trans-Golgi network. It is found in the endosome. The protein localises to the multivesicular body. Coreceptor for GDNF, a neurotrophic factor that enhances survival and morphological differentiation of dopaminergic neurons and increases their high-affinity dopamine uptake. GDNF-binding leads to autophosphorylation and activation of the RET receptor. The protein is GDNF family receptor alpha-1 (GFRA1) of Homo sapiens (Human).